Consider the following 206-residue polypeptide: Nucleoside triphosphate pyrophosphatase (206 aa).

Aspartate 76 acts as the Proton acceptor in catalysis.

This sequence belongs to the Maf family. A divalent metal cation serves as cofactor.

It is found in the cytoplasm. It catalyses the reaction a ribonucleoside 5'-triphosphate + H2O = a ribonucleoside 5'-phosphate + diphosphate + H(+). The catalysed reaction is a 2'-deoxyribonucleoside 5'-triphosphate + H2O = a 2'-deoxyribonucleoside 5'-phosphate + diphosphate + H(+). Functionally, nucleoside triphosphate pyrophosphatase. May have a dual role in cell division arrest and in preventing the incorporation of modified nucleotides into cellular nucleic acids. The protein is Nucleoside triphosphate pyrophosphatase of Streptomyces coelicolor (strain ATCC BAA-471 / A3(2) / M145).